Here is a 481-residue protein sequence, read N- to C-terminus: Phosphoenolpyruvate phosphatase (481 aa).

The signal sequence occupies residues 1-36 (MPIYTSRSCFYLLLFHIILLCSVDKTLCRQTSSFVR). Residue Asn109 is glycosylated (N-linked (GlcNAc...) asparagine). The Fe cation site is built by Asp168, Asp195, and Tyr198. Position 195 (Asp195) interacts with Zn(2+). Asn206 is a glycosylation site (N-linked (GlcNAc...) asparagine). Positions 232 and 317 each coordinate Zn(2+). Asn232 lines the substrate pocket. The active-site Proton donor is His327. A Zn(2+)-binding site is contributed by His354. 354–356 (HVH) serves as a coordination point for substrate. Residue His356 coordinates Fe cation. N-linked (GlcNAc...) asparagine glycans are attached at residues Asn370 and Asn427.

The protein belongs to the metallophosphoesterase superfamily. Purple acid phosphatase family.

The protein resides in the vacuole lumen. The catalysed reaction is phosphoenolpyruvate + H2O = pyruvate + phosphate. Phosphoenolpyruvate phosphatase that probably operates in the vacuole to release phosphate from phosphoenolpyruvate (PEP) under phosphorus starvation. This Allium cepa (Onion) protein is Phosphoenolpyruvate phosphatase (ACPEPP).